We begin with the raw amino-acid sequence, 1407 residues long: DNA-directed RNA polymerase subunit beta' (1407 aa).

The Zn(2+) site is built by Cys-70, Cys-72, Cys-85, and Cys-88. Asp-460, Asp-462, and Asp-464 together coordinate Mg(2+). Zn(2+) contacts are provided by Cys-814, Cys-888, Cys-895, and Cys-898. Lys-972 is modified (N6-acetyllysine).

The protein belongs to the RNA polymerase beta' chain family. The RNAP catalytic core consists of 2 alpha, 1 beta, 1 beta' and 1 omega subunit. When a sigma factor is associated with the core the holoenzyme is formed, which can initiate transcription. It depends on Mg(2+) as a cofactor. Requires Zn(2+) as cofactor.

The enzyme catalyses RNA(n) + a ribonucleoside 5'-triphosphate = RNA(n+1) + diphosphate. Its function is as follows. DNA-dependent RNA polymerase catalyzes the transcription of DNA into RNA using the four ribonucleoside triphosphates as substrates. The polypeptide is DNA-directed RNA polymerase subunit beta' (Escherichia coli (strain SMS-3-5 / SECEC)).